Here is a 200-residue protein sequence, read N- to C-terminus: Lipopolysaccharide core heptose(II)-phosphate phosphatase (200 aa).

The first 25 residues, 1-25 (MLAFCRSSLKSKKYIIILLALAAIA), serve as a signal peptide directing secretion.

This sequence belongs to the phosphoglycerate mutase family. Ais subfamily.

The protein localises to the periplasm. Its pathway is bacterial outer membrane biogenesis; lipopolysaccharide metabolism. In terms of biological role, catalyzes the dephosphorylation of heptose(II) of the outer membrane lipopolysaccharide core. This is Lipopolysaccharide core heptose(II)-phosphate phosphatase from Escherichia coli (strain ATCC 8739 / DSM 1576 / NBRC 3972 / NCIMB 8545 / WDCM 00012 / Crooks).